The primary structure comprises 769 residues: Protein transport protein sec39 (769 aa).

Belongs to the SEC39 family. In terms of assembly, component of a peripheral membrane protein complex consisting of dsl1, sec39 and tip20.

Its subcellular location is the endoplasmic reticulum membrane. Functionally, required for protein transport between the Golgi and the endoplasmic reticulum. May contribute to tethering of coatomer-coated retrograde transport vesicles to the ER membrane through interaction with and stabilization of the SNARE complex. The sequence is that of Protein transport protein sec39 from Schizosaccharomyces pombe (strain 972 / ATCC 24843) (Fission yeast).